Reading from the N-terminus, the 34-residue chain is Photosystem II reaction center protein M (34 aa).

Residues 5-25 form a helical membrane-spanning segment; that stretch reads ILAFIATTLFVLVPTAFLLII.

It belongs to the PsbM family. In terms of assembly, PSII is composed of 1 copy each of membrane proteins PsbA, PsbB, PsbC, PsbD, PsbE, PsbF, PsbH, PsbI, PsbJ, PsbK, PsbL, PsbM, PsbT, PsbX, PsbY, PsbZ, Psb30/Ycf12, at least 3 peripheral proteins of the oxygen-evolving complex and a large number of cofactors. It forms dimeric complexes.

It localises to the plastid. It is found in the chloroplast thylakoid membrane. Functionally, one of the components of the core complex of photosystem II (PSII). PSII is a light-driven water:plastoquinone oxidoreductase that uses light energy to abstract electrons from H(2)O, generating O(2) and a proton gradient subsequently used for ATP formation. It consists of a core antenna complex that captures photons, and an electron transfer chain that converts photonic excitation into a charge separation. This subunit is found at the monomer-monomer interface. The chain is Photosystem II reaction center protein M from Citrus sinensis (Sweet orange).